The primary structure comprises 209 residues: dTTP/UTP pyrophosphatase (209 aa).

Aspartate 79 functions as the Proton acceptor in the catalytic mechanism.

This sequence belongs to the Maf family. YhdE subfamily. Requires a divalent metal cation as cofactor.

The protein localises to the cytoplasm. It carries out the reaction dTTP + H2O = dTMP + diphosphate + H(+). The catalysed reaction is UTP + H2O = UMP + diphosphate + H(+). Nucleoside triphosphate pyrophosphatase that hydrolyzes dTTP and UTP. May have a dual role in cell division arrest and in preventing the incorporation of modified nucleotides into cellular nucleic acids. The polypeptide is dTTP/UTP pyrophosphatase (Chelativorans sp. (strain BNC1)).